The chain runs to 453 residues: Plasmepsin II (453 aa).

Residues 1-37 (MDITVREHDFKHGFIKSNSTFDGLNIDNSKNKKKIQK) are Cytoplasmic-facing. Residues 1–124 (MDITVREHDF…SGLTKTNYLG (124 aa)) constitute a propeptide that is removed on maturation. Residues 38–58 (GFQILYVLLFCSVMCGLFYYV) form a helical; Signal-anchor for type II membrane protein membrane-spanning segment. Topologically, residues 59-453 (YENVWLQRDN…VGIALAKKNL (395 aa)) are lumenal. A Peptidase A1 domain is found at 140 to 447 (FYGDAEVGDN…DYDNHSVGIA (308 aa)). The active site involves Asp158. Residues Cys171 and Cys176 are joined by a disulfide bond. Asp338 is a catalytic residue. Cys373 and Cys409 are disulfide-bonded.

This sequence belongs to the peptidase A1 family. As to quaternary structure, component of the hemozoin formation complex (HFC) composed of falcipains FP2A and/or FP2B, plasmepsins PMII, PMIII/HAP and PMIV, heme detoxifying protein HDP and falcilysin FLN. The HFC complex is involved in hemoglobin degradation and detoxification of heme in the food vacuole during the asexual blood stage. Not N-glycosylated. Post-translationally, proteolytically cleaved into the soluble active mature form in the digestive vacuole by cysteine protease falcipains; the process begins at the early ring stage. Proteolysis requires an acidic environment. In absence of falcipains, autoprocessing may serve as an alternate activation system.

Its subcellular location is the membrane. The protein localises to the vacuole lumen. The protein resides in the vacuole membrane. It catalyses the reaction Hydrolysis of the bonds linking certain hydrophobic residues in hemoglobin or globin. Also cleaves small molecules substrates such as Ala-Leu-Glu-Arg-Thr-Phe-|-Phe(NO2)-Ser-Phe-Pro-Thr.. Inhibited by pepstatin A. In terms of biological role, during the asexual blood stage, participates in initial cleavage of native host hemoglobin (Hb) resulting in Hb denaturation. May cleave preferentially denatured hemoglobin that has been cleaved by PMI. Digestion of host Hb is an essential step which provides the parasite with amino acids for protein synthesis, and regulates osmolarity. This is Plasmepsin II from Plasmodium falciparum (isolate HB3).